The sequence spans 144 residues: Gastric inhibitory polypeptide (144 aa).

The signal sequence occupies residues 1–21; it reads MVALKTCSLLLVLLFLAVGLG. 2 consecutive propeptides follow at residues 22 to 42 and 87 to 144; these read EKEEVEFRSHAKFAGPRPRGP and EARA…LRSQ. The segment at 92-112 is disordered; it reads ELAGQSQRNEEKEAQGSSLPK.

Belongs to the glucagon family. In terms of tissue distribution, highly expressed in the duodenum and jejunum.

It is found in the secreted. In terms of biological role, potent stimulator of insulin secretion and relatively poor inhibitor of gastric acid secretion. The chain is Gastric inhibitory polypeptide (Gip) from Rattus norvegicus (Rat).